We begin with the raw amino-acid sequence, 298 residues long: Phosphatidylserine decarboxylase proenzyme (298 aa).

Catalysis depends on charge relay system; for autoendoproteolytic cleavage activity residues aspartate 113, histidine 169, and serine 256. The Schiff-base intermediate with substrate; via pyruvic acid; for decarboxylase activity role is filled by serine 256. Serine 256 carries the pyruvic acid (Ser); by autocatalysis modification.

It belongs to the phosphatidylserine decarboxylase family. PSD-B subfamily. Prokaryotic type II sub-subfamily. As to quaternary structure, heterodimer of a large membrane-associated beta subunit and a small pyruvoyl-containing alpha subunit. The cofactor is pyruvate. Is synthesized initially as an inactive proenzyme. Formation of the active enzyme involves a self-maturation process in which the active site pyruvoyl group is generated from an internal serine residue via an autocatalytic post-translational modification. Two non-identical subunits are generated from the proenzyme in this reaction, and the pyruvate is formed at the N-terminus of the alpha chain, which is derived from the carboxyl end of the proenzyme. The autoendoproteolytic cleavage occurs by a canonical serine protease mechanism, in which the side chain hydroxyl group of the serine supplies its oxygen atom to form the C-terminus of the beta chain, while the remainder of the serine residue undergoes an oxidative deamination to produce ammonia and the pyruvoyl prosthetic group on the alpha chain. During this reaction, the Ser that is part of the protease active site of the proenzyme becomes the pyruvoyl prosthetic group, which constitutes an essential element of the active site of the mature decarboxylase.

The protein localises to the cell membrane. It catalyses the reaction a 1,2-diacyl-sn-glycero-3-phospho-L-serine + H(+) = a 1,2-diacyl-sn-glycero-3-phosphoethanolamine + CO2. It participates in phospholipid metabolism; phosphatidylethanolamine biosynthesis; phosphatidylethanolamine from CDP-diacylglycerol: step 2/2. Catalyzes the formation of phosphatidylethanolamine (PtdEtn) from phosphatidylserine (PtdSer). In Desulfitobacterium hafniense (strain DSM 10664 / DCB-2), this protein is Phosphatidylserine decarboxylase proenzyme.